We begin with the raw amino-acid sequence, 143 residues long: Anti-sigma F factor (143 aa).

Belongs to the anti-sigma-factor family.

The catalysed reaction is L-seryl-[protein] + ATP = O-phospho-L-seryl-[protein] + ADP + H(+). The enzyme catalyses L-threonyl-[protein] + ATP = O-phospho-L-threonyl-[protein] + ADP + H(+). In terms of biological role, binds to sigma F and blocks its ability to form an RNA polymerase holoenzyme (E-sigma F). Phosphorylates SpoIIAA on a serine residue. This phosphorylation may enable SpoIIAA to act as an anti-anti-sigma factor that counteracts SpoIIAB and thus releases sigma F from inhibition. The sequence is that of Anti-sigma F factor from Clostridium novyi (strain NT).